We begin with the raw amino-acid sequence, 346 residues long: Holliday junction branch migration complex subunit RuvB (346 aa).

The interval 1-182 (MSERLVTSNE…LGVLCSMEYY (182 aa)) is large ATPase domain (RuvB-L). ATP-binding positions include L21, R22, G63, K66, T67, T68, 129-131 (EDY), R172, Y182, and R219. T67 is a binding site for Mg(2+). The segment at 183–253 (TDEQLKEIII…AAKKSLEILE (71 aa)) is small ATPAse domain (RuvB-S). Residues 256–346 (GEGFDRIDNK…DSKQCTLFEK (91 aa)) are head domain (RuvB-H). R311 and R316 together coordinate DNA.

The protein belongs to the RuvB family. As to quaternary structure, homohexamer. Forms an RuvA(8)-RuvB(12)-Holliday junction (HJ) complex. HJ DNA is sandwiched between 2 RuvA tetramers; dsDNA enters through RuvA and exits via RuvB. An RuvB hexamer assembles on each DNA strand where it exits the tetramer. Each RuvB hexamer is contacted by two RuvA subunits (via domain III) on 2 adjacent RuvB subunits; this complex drives branch migration. In the full resolvosome a probable DNA-RuvA(4)-RuvB(12)-RuvC(2) complex forms which resolves the HJ.

Its subcellular location is the cytoplasm. It carries out the reaction ATP + H2O = ADP + phosphate + H(+). The RuvA-RuvB-RuvC complex processes Holliday junction (HJ) DNA during genetic recombination and DNA repair, while the RuvA-RuvB complex plays an important role in the rescue of blocked DNA replication forks via replication fork reversal (RFR). RuvA specifically binds to HJ cruciform DNA, conferring on it an open structure. The RuvB hexamer acts as an ATP-dependent pump, pulling dsDNA into and through the RuvAB complex. RuvB forms 2 homohexamers on either side of HJ DNA bound by 1 or 2 RuvA tetramers; 4 subunits per hexamer contact DNA at a time. Coordinated motions by a converter formed by DNA-disengaged RuvB subunits stimulates ATP hydrolysis and nucleotide exchange. Immobilization of the converter enables RuvB to convert the ATP-contained energy into a lever motion, pulling 2 nucleotides of DNA out of the RuvA tetramer per ATP hydrolyzed, thus driving DNA branch migration. The RuvB motors rotate together with the DNA substrate, which together with the progressing nucleotide cycle form the mechanistic basis for DNA recombination by continuous HJ branch migration. Branch migration allows RuvC to scan DNA until it finds its consensus sequence, where it cleaves and resolves cruciform DNA. This Clostridium perfringens (strain 13 / Type A) protein is Holliday junction branch migration complex subunit RuvB.